A 365-amino-acid polypeptide reads, in one-letter code: Sulfate/thiosulfate import ATP-binding protein CysA (365 aa).

The ABC transporter domain maps to 3–237; it reads IEIARIKKSF…PATRFVLEFM (235 aa). 35–42 serves as a coordination point for ATP; the sequence is GPSGSGKT.

The protein belongs to the ABC transporter superfamily. Sulfate/tungstate importer (TC 3.A.1.6) family. As to quaternary structure, the complex is composed of two ATP-binding proteins (CysA), two transmembrane proteins (CysT and CysW) and a solute-binding protein (CysP).

It localises to the cell inner membrane. The catalysed reaction is sulfate(out) + ATP + H2O = sulfate(in) + ADP + phosphate + H(+). The enzyme catalyses thiosulfate(out) + ATP + H2O = thiosulfate(in) + ADP + phosphate + H(+). Part of the ABC transporter complex CysAWTP involved in sulfate/thiosulfate import. Responsible for energy coupling to the transport system. This Salmonella typhimurium (strain LT2 / SGSC1412 / ATCC 700720) protein is Sulfate/thiosulfate import ATP-binding protein CysA.